Reading from the N-terminus, the 320-residue chain is MSSSIEEVKATIKSVKLTDSQAEKLSKLIDSLPKILSGLDNPEYDEIFGYRINTKDKPYVDESIRNEILLKFLAADDYNLELSEKRLIDSLNWRNEFQPLSAAFEETFDKELNELGVITNFPNSNLKITTWNLYGNLKNPKKIFEKFGANNKVSKLPGSQFLRWRVGLMEKSLQLIDFTSTTDNRIAQVHDYNNVSMFKIDPGMKKATKEIITIFGANYPELLSTKFFINVPLIMGWVFTFFKTIRVITEATLKKFQVLNHGNLSESFNPDELPKVYGGKVEKSLFDIDVSDDIKLSEYGEVILKKVGDEEINHINDDVE.

One can recognise a CRAL-TRIO domain in the interval 120-285; sequence NFPNSNLKIT…VYGGKVEKSL (166 aa). Heme-binding residues include Tyr-134, Arg-165, His-190, Tyr-192, and Lys-226.

It belongs to the SFH5 family. The cofactor is heme b.

Its subcellular location is the cytoplasm. The protein resides in the endoplasmic reticulum membrane. It localises to the microsome membrane. It carries out the reaction a 1,2-diacyl-sn-glycero-3-phospho-(1D-myo-inositol)(in) = a 1,2-diacyl-sn-glycero-3-phospho-(1D-myo-inositol)(out). Non-classical phosphatidylinositol (PtdIns) transfer protein (PITP), which exhibits PtdIns-binding/transfer activity in the absence of detectable PtdCho-binding/transfer activity. Regulates PtdIns(4,5)P2 homeostasis at the plasma membrane. Heme-binding protein that may play a role in organic oxidant-induced stress responses. This Candida albicans (strain SC5314 / ATCC MYA-2876) (Yeast) protein is Phosphatidylinositol transfer protein SFH5 (SFH5).